We begin with the raw amino-acid sequence, 279 residues long: Reaction center protein L chain (279 aa).

3 helical membrane passes run 33–56 (GFFGVTTLFFSVLGTALIIWGASQ), 85–113 (GLWQIITVCAIGAFVSWALREVEICRKLG), and 116–141 (YHVPIAFSFAILAYVTLVVIRPILMG). Positions 154 and 174 each coordinate (7R,8Z)-bacteriochlorophyll b. A helical membrane pass occupies residues 171–200 (NPAHMLAITFFFTTTLAMSMHGGLILSAAN). Histidine 191 lines the Fe cation pocket. Residue phenylalanine 217 coordinates a ubiquinone. Residues 226–252 (GSLGIHRLGLFLALSAAFWSAVCIVIS) form a helical membrane-spanning segment. Residue histidine 231 coordinates Fe cation.

The protein belongs to the reaction center PufL/M/PsbA/D family. As to quaternary structure, reaction center is composed of four bacteriochlorophylls, two bacteriopheophytins, two ubiquinones, one iron, and three highly hydrophobic polypeptide chains (designated L, M, and H).

Its subcellular location is the cell inner membrane. The reaction center is a membrane-bound complex that mediates the initial photochemical event in the electron transfer process of photosynthesis. The chain is Reaction center protein L chain (pufL) from Rubrivivax gelatinosus (strain NBRC 100245 / IL144).